A 414-amino-acid polypeptide reads, in one-letter code: NADH kinase POS5, mitochondrial (414 aa).

This sequence belongs to the NAD kinase family.

Its subcellular location is the mitochondrion matrix. It catalyses the reaction NADH + ATP = ADP + NADPH + H(+). Its function is as follows. Phosphorylates both NADH and NAD(+), with a twofold preference for NADH. Anti-oxidant factor and key source of the cellular reductant NADPH. The protein is NADH kinase POS5, mitochondrial (POS5) of Saccharomyces cerevisiae (strain ATCC 204508 / S288c) (Baker's yeast).